Here is a 237-residue protein sequence, read N- to C-terminus: Ribosomal RNA small subunit methyltransferase G (237 aa).

Residues Gly-78, Phe-83, 129 to 130 (AE), and Arg-148 contribute to the S-adenosyl-L-methionine site. The disordered stretch occupies residues 216–237 (SKKKETPNKYPRKAGTPNKKPL).

Belongs to the methyltransferase superfamily. RNA methyltransferase RsmG family.

The protein resides in the cytoplasm. Its function is as follows. Specifically methylates the N7 position of a guanine in 16S rRNA. The sequence is that of Ribosomal RNA small subunit methyltransferase G from Streptococcus agalactiae serotype V (strain ATCC BAA-611 / 2603 V/R).